The sequence spans 207 residues: Phosphoenolpyruvate guanylyltransferase (207 aa).

Phosphoenolpyruvate-binding residues include T137, G153, and S156.

It belongs to the CofC family.

The enzyme catalyses phosphoenolpyruvate + GTP + H(+) = enolpyruvoyl-2-diphospho-5'-guanosine + diphosphate. It functions in the pathway cofactor biosynthesis; coenzyme F420 biosynthesis. Guanylyltransferase that catalyzes the activation of phosphoenolpyruvate (PEP) as enolpyruvoyl-2-diphospho-5'-guanosine, via the condensation of PEP with GTP. It is involved in the biosynthesis of coenzyme F420, a hydride carrier cofactor. This Sphaerobacter thermophilus (strain ATCC 49802 / DSM 20745 / KCCM 41009 / NCIMB 13125 / S 6022) protein is Phosphoenolpyruvate guanylyltransferase.